The primary structure comprises 417 residues: Serine hydroxymethyltransferase (417 aa).

Residues L121 and 125-127 (GHL) each bind (6S)-5,6,7,8-tetrahydrofolate. Residue K229 is modified to N6-(pyridoxal phosphate)lysine. 355–357 (SPF) contacts (6S)-5,6,7,8-tetrahydrofolate.

This sequence belongs to the SHMT family. As to quaternary structure, homodimer. It depends on pyridoxal 5'-phosphate as a cofactor.

It localises to the cytoplasm. The catalysed reaction is (6R)-5,10-methylene-5,6,7,8-tetrahydrofolate + glycine + H2O = (6S)-5,6,7,8-tetrahydrofolate + L-serine. Its pathway is one-carbon metabolism; tetrahydrofolate interconversion. It functions in the pathway amino-acid biosynthesis; glycine biosynthesis; glycine from L-serine: step 1/1. Catalyzes the reversible interconversion of serine and glycine with tetrahydrofolate (THF) serving as the one-carbon carrier. This reaction serves as the major source of one-carbon groups required for the biosynthesis of purines, thymidylate, methionine, and other important biomolecules. Also exhibits THF-independent aldolase activity toward beta-hydroxyamino acids, producing glycine and aldehydes, via a retro-aldol mechanism. The polypeptide is Serine hydroxymethyltransferase (Shewanella sp. (strain MR-4)).